A 300-amino-acid chain; its full sequence is 4-hydroxy-tetrahydrodipicolinate synthase (300 aa).

A pyruvate-binding site is contributed by Thr-57. Tyr-145 acts as the Proton donor/acceptor in catalysis. Lys-173 serves as the catalytic Schiff-base intermediate with substrate. Residue Ile-213 participates in pyruvate binding.

The protein belongs to the DapA family. Homotetramer; dimer of dimers.

The protein resides in the cytoplasm. The catalysed reaction is L-aspartate 4-semialdehyde + pyruvate = (2S,4S)-4-hydroxy-2,3,4,5-tetrahydrodipicolinate + H2O + H(+). It participates in amino-acid biosynthesis; L-lysine biosynthesis via DAP pathway; (S)-tetrahydrodipicolinate from L-aspartate: step 3/4. Functionally, catalyzes the condensation of (S)-aspartate-beta-semialdehyde [(S)-ASA] and pyruvate to 4-hydroxy-tetrahydrodipicolinate (HTPA). The sequence is that of 4-hydroxy-tetrahydrodipicolinate synthase from Corynebacterium jeikeium (strain K411).